We begin with the raw amino-acid sequence, 267 residues long: Small ribosomal subunit protein uS3 (267 aa).

Positions 38 to 106 (IRKLLATGME…QVQLNILEVK (69 aa)) constitute a KH type-2 domain. Residues 215 to 267 (TAASAPAGDRDRPRRERPSRPRRSGSTGTTATSTEAGRAATAVVEAPAENQEG) are disordered. The segment covering 222 to 233 (GDRDRPRRERPS) has biased composition (basic and acidic residues). Over residues 238-256 (SGSTGTTATSTEAGRAATA) the composition is skewed to low complexity.

The protein belongs to the universal ribosomal protein uS3 family. In terms of assembly, part of the 30S ribosomal subunit. Forms a tight complex with proteins S10 and S14.

Functionally, binds the lower part of the 30S subunit head. Binds mRNA in the 70S ribosome, positioning it for translation. The polypeptide is Small ribosomal subunit protein uS3 (Nocardia farcinica (strain IFM 10152)).